Here is a 93-residue protein sequence, read N- to C-terminus: Small ribosomal subunit protein uS19 (93 aa).

This sequence belongs to the universal ribosomal protein uS19 family.

Functionally, protein S19 forms a complex with S13 that binds strongly to the 16S ribosomal RNA. In Salinispora tropica (strain ATCC BAA-916 / DSM 44818 / JCM 13857 / NBRC 105044 / CNB-440), this protein is Small ribosomal subunit protein uS19.